A 689-amino-acid polypeptide reads, in one-letter code: Glycine--tRNA ligase beta subunit (689 aa).

This sequence belongs to the class-II aminoacyl-tRNA synthetase family. In terms of assembly, tetramer of two alpha and two beta subunits.

The protein localises to the cytoplasm. It catalyses the reaction tRNA(Gly) + glycine + ATP = glycyl-tRNA(Gly) + AMP + diphosphate. In Citrobacter koseri (strain ATCC BAA-895 / CDC 4225-83 / SGSC4696), this protein is Glycine--tRNA ligase beta subunit.